The primary structure comprises 104 residues: Protein Rev (104 aa).

The residue at position 5 (S5) is a Phosphoserine; by host CK2. Residues 18 to 26 (VIKILYQSN) are homomultimerization. Over residues 25-34 (SNPYPNSKGT) the composition is skewed to polar residues. 2 disordered regions span residues 25 to 48 (SNPYPNSKGTRQARRNRRRRWRAR) and 63 to 104 (CLGG…ATTE). The Nuclear localization signal and RNA-binding (RRE) motif lies at 34 to 50 (TRQARRNRRRRWRARQR). The span at 35–48 (RQARRNRRRRWRAR) shows a compositional bias: basic residues. The segment covering 67–77 (PPEPVDLPLPP) has biased composition (pro residues). The Nuclear export signal and binding to XPO1 motif lies at 73–84 (LPLPPLDRLTLD). Residues 91-104 (TPGTESQQGTATTE) are compositionally biased toward polar residues.

Belongs to the HIV-1 REV protein family. Homomultimer; when bound to the RRE. Multimeric assembly is essential for activity and may involve XPO1. Binds to human KPNB1, XPO1, TNPO1, RANBP5 and IPO7. Interacts with the viral Integrase. Interacts with human KHDRBS1. Interacts with human NAP1; this interaction decreases Rev multimerization and stimulates its activity. Interacts with human DEAD-box helicases DDX3 and DDX24; these interactions may serve for viral RNA export to the cytoplasm and packaging, respectively. Interacts with human PSIP1; this interaction may inhibit HIV-1 DNA integration by promoting dissociation of the Integrase-LEDGF/p75 complex. In terms of processing, asymmetrically arginine dimethylated at one site by host PRMT6. Methylation impairs the RNA-binding activity and export of viral RNA from the nucleus to the cytoplasm. Phosphorylated by protein kinase CK2. Presence of, and maybe binding to the N-terminus of the regulatory beta subunit of CK2 is necessary for CK2-mediated Rev's phosphorylation.

It is found in the host nucleus. It localises to the host nucleolus. The protein localises to the host cytoplasm. In terms of biological role, escorts unspliced or incompletely spliced viral pre-mRNAs (late transcripts) out of the nucleus of infected cells. These pre-mRNAs carry a recognition sequence called Rev responsive element (RRE) located in the env gene, that is not present in fully spliced viral mRNAs (early transcripts). This function is essential since most viral proteins are translated from unspliced or partially spliced pre-mRNAs which cannot exit the nucleus by the pathway used by fully processed cellular mRNAs. Rev itself is translated from a fully spliced mRNA that readily exits the nucleus. Rev's nuclear localization signal (NLS) binds directly to KPNB1/Importin beta-1 without previous binding to KPNA1/Importin alpha-1. KPNB1 binds to the GDP bound form of RAN (Ran-GDP) and targets Rev to the nucleus. In the nucleus, the conversion from Ran-GDP to Ran-GTP dissociates Rev from KPNB1 and allows Rev's binding to the RRE in viral pre-mRNAs. Rev multimerization on the RRE via cooperative assembly exposes its nuclear export signal (NES) to the surface. Rev can then form a complex with XPO1/CRM1 and Ran-GTP, leading to nuclear export of the complex. Conversion from Ran-GTP to Ran-GDP mediates dissociation of the Rev/RRE/XPO1/RAN complex, so that Rev can return to the nucleus for a subsequent round of export. Beside KPNB1, also seems to interact with TNPO1/Transportin-1, RANBP5/IPO5 and IPO7/RANBP7 for nuclear import. The nucleoporin-like HRB/RIP is an essential cofactor that probably indirectly interacts with Rev to release HIV RNAs from the perinuclear region to the cytoplasm. This chain is Protein Rev, found in Human immunodeficiency virus type 1 group N (isolate YBF30) (HIV-1).